The primary structure comprises 414 residues: Glutamyl-tRNA reductase (414 aa).

Substrate-binding positions include 47 to 50 (TCNR), Ser-106, 111 to 113 (EAQ), and Gln-117. The active-site Nucleophile is the Cys-48. 185–190 (GAGRTG) serves as a coordination point for NADP(+).

This sequence belongs to the glutamyl-tRNA reductase family. In terms of assembly, homodimer.

The catalysed reaction is (S)-4-amino-5-oxopentanoate + tRNA(Glu) + NADP(+) = L-glutamyl-tRNA(Glu) + NADPH + H(+). It functions in the pathway porphyrin-containing compound metabolism; protoporphyrin-IX biosynthesis; 5-aminolevulinate from L-glutamyl-tRNA(Glu): step 1/2. Its function is as follows. Catalyzes the NADPH-dependent reduction of glutamyl-tRNA(Glu) to glutamate 1-semialdehyde (GSA). The chain is Glutamyl-tRNA reductase from Herpetosiphon aurantiacus (strain ATCC 23779 / DSM 785 / 114-95).